Consider the following 157-residue polypeptide: Protein-export protein SecB (157 aa).

Belongs to the SecB family. In terms of assembly, homotetramer, a dimer of dimers. One homotetramer interacts with 1 SecA dimer.

It is found in the cytoplasm. Its function is as follows. One of the proteins required for the normal export of preproteins out of the cell cytoplasm. It is a molecular chaperone that binds to a subset of precursor proteins, maintaining them in a translocation-competent state. It also specifically binds to its receptor SecA. The sequence is that of Protein-export protein SecB from Shewanella frigidimarina (strain NCIMB 400).